We begin with the raw amino-acid sequence, 437 residues long: Adenylosuccinate synthetase (437 aa).

GTP contacts are provided by residues 12–18 (GDEGKGK) and 40–42 (GHT). The active-site Proton acceptor is the Asp13. Positions 13 and 40 each coordinate Mg(2+). IMP-binding positions include 13–16 (DEGK), 38–41 (NAGH), Thr128, Arg142, Gln223, Thr238, and Arg302. His41 acts as the Proton donor in catalysis. 298-304 (TTTGRRR) is a binding site for substrate. Residues Arg304, 330-332 (KLD), and 412-414 (SLG) each bind GTP.

This sequence belongs to the adenylosuccinate synthetase family. As to quaternary structure, homodimer. Requires Mg(2+) as cofactor.

Its subcellular location is the cytoplasm. The enzyme catalyses IMP + L-aspartate + GTP = N(6)-(1,2-dicarboxyethyl)-AMP + GDP + phosphate + 2 H(+). It participates in purine metabolism; AMP biosynthesis via de novo pathway; AMP from IMP: step 1/2. Functionally, plays an important role in the de novo pathway of purine nucleotide biosynthesis. Catalyzes the first committed step in the biosynthesis of AMP from IMP. The sequence is that of Adenylosuccinate synthetase from Synechococcus sp. (strain RCC307).